A 141-amino-acid polypeptide reads, in one-letter code: MAIQRTFSIIKPNAVKKNVIGAIYNRFESAGFSIVAAKMLHLTREQAEGFYEEHKGRPFFDGLVEFMTSGPIMVQVLEGENAIQRHRDLMGATNPDNALAGTLRADYADSFTENAVHGSDSEASAAREIAYFFTENEICPR.

ATP is bound by residues lysine 11, phenylalanine 59, arginine 87, threonine 93, arginine 104, and asparagine 114. Histidine 117 functions as the Pros-phosphohistidine intermediate in the catalytic mechanism.

The protein belongs to the NDK family. As to quaternary structure, homotetramer. Requires Mg(2+) as cofactor.

The protein resides in the cytoplasm. It carries out the reaction a 2'-deoxyribonucleoside 5'-diphosphate + ATP = a 2'-deoxyribonucleoside 5'-triphosphate + ADP. The enzyme catalyses a ribonucleoside 5'-diphosphate + ATP = a ribonucleoside 5'-triphosphate + ADP. Major role in the synthesis of nucleoside triphosphates other than ATP. The ATP gamma phosphate is transferred to the NDP beta phosphate via a ping-pong mechanism, using a phosphorylated active-site intermediate. This chain is Nucleoside diphosphate kinase, found in Proteus mirabilis (strain HI4320).